Here is a 147-residue protein sequence, read N- to C-terminus: Flagellar assembly factor FliW (147 aa).

This sequence belongs to the FliW family. Interacts with translational regulator CsrA and flagellin(s).

It localises to the cytoplasm. In terms of biological role, acts as an anti-CsrA protein, binds CsrA and prevents it from repressing translation of its target genes, one of which is flagellin. Binds to flagellin and participates in the assembly of the flagellum. The polypeptide is Flagellar assembly factor FliW (Oceanobacillus iheyensis (strain DSM 14371 / CIP 107618 / JCM 11309 / KCTC 3954 / HTE831)).